We begin with the raw amino-acid sequence, 473 residues long: Serine/threonine-protein phosphatase T (473 aa).

TPR repeat units lie at residues 5 to 38 (ALEL…DSTN), 40 to 72 (ILYS…DPEY), and 73 to 106 (AKAY…APSD). A catalytic region spans residues 159 to 472 (KQITKEFVED…MAYANGLLSG (314 aa)). Residues aspartate 217, histidine 219, aspartate 246, and asparagine 278 each contribute to the Mn(2+) site. The active-site Proton donor/acceptor is the histidine 279. Mn(2+) is bound by residues histidine 327 and histidine 404.

This sequence belongs to the PPP phosphatase family. PP-5 (PP-T) subfamily. It depends on Mg(2+) as a cofactor. Mn(2+) is required as a cofactor.

It is found in the nucleus. It carries out the reaction O-phospho-L-seryl-[protein] + H2O = L-seryl-[protein] + phosphate. It catalyses the reaction O-phospho-L-threonyl-[protein] + H2O = L-threonyl-[protein] + phosphate. Its function is as follows. Protein phosphatase that specifically binds to and dephosphorylates the molecular chaperone Hsp90. Dephosphorylation positively regulates the Hsp90 chaperone machinery. The chain is Serine/threonine-protein phosphatase T (ppt1) from Schizosaccharomyces pombe (strain 972 / ATCC 24843) (Fission yeast).